A 533-amino-acid chain; its full sequence is Beta-1,4-mannosyl-glycoprotein 4-beta-N-acetylglucosaminyltransferase (533 aa).

Residues 1-7 (MKMRRYK) lie on the Cytoplasmic side of the membrane. A helical; Signal-anchor for type II membrane protein transmembrane segment spans residues 8–23 (LFLMFCMAGLCLISFL). Residues 24 to 533 (HFFKTLSYVT…ARGKLDEAEV (510 aa)) are Lumenal-facing. The interval 119-158 (KPGTKMLERPPPGRPEEKPEGANGSSARRPPRYLLSARER) is disordered. Asparagine 141, asparagine 241, asparagine 259, and asparagine 397 each carry an N-linked (GlcNAc...) asparagine glycan. The disordered stretch occupies residues 507 to 533 (STAAGGWRHRGPEGRPPARGKLDEAEV).

The protein belongs to the glycosyltransferase 17 family. Interacts with MGAT4D.

Its subcellular location is the golgi apparatus membrane. It catalyses the reaction N(4)-{beta-D-GlcNAc-(1-&gt;2)-alpha-D-Man-(1-&gt;3)-[beta-D-GlcNAc-(1-&gt;2)-alpha-D-Man-(1-&gt;6)]-beta-D-Man-(1-&gt;4)-beta-D-GlcNAc-(1-&gt;4)-beta-D-GlcNAc}-L-asparaginyl-[protein] + UDP-N-acetyl-alpha-D-glucosamine = N(4)-{beta-D-GlcNAc-(1-&gt;2)-alpha-D-Man-(1-&gt;3)-[beta-D-GlcNAc-(1-&gt;4)]-[beta-D-GlcNAc-(1-&gt;2)-alpha-D-Man-(1-&gt;6)]-beta-D-Man-(1-&gt;4)-beta-D-GlcNAc-(1-&gt;4)-beta-D-GlcNAc}-L-asparaginyl-[protein] + UDP + H(+). It participates in protein modification; protein glycosylation. It is involved in the regulation of the biosynthesis and biological function of glycoprotein oligosaccharides. Catalyzes the addition of N-acetylglucosamine in beta 1-4 linkage to the beta-linked mannose of the trimannosyl core of N-linked sugar chains, called bisecting N-acetylglucosamine (GlcNAc). It is one of the most important enzymes involved in the regulation of the biosynthesis of glycoprotein oligosaccharides. The addition of this bisecting GlcNAc residue alters not only the composition, but also the conformation of the N-glycan. The introduction of the bisecting GlcNAc residue results in the suppression of further processing and elongation of N-glycans, precluding the formation of beta-1,6 GlcNAc branching, catalyzed by MGAT5 since it is unable to use the bisected oligosaccharide as a substrate. Addition of bisecting N-acetylglucosamine to CDH1/E-cadherin modulates CDH1 cell membrane location. Inhibits NeuAc-alpha-2,3-Gal-beta-1,4-GlcNAc- formation which modulates sialylation levels and plays a role in cell migration regulation. In brain, addition of bisecting N-acetylglucosamine to BACE1 blocks its lysosomal targeting in response to oxidative stress and further degradation which increases its location to early endosome and the APP cleavage. The polypeptide is Beta-1,4-mannosyl-glycoprotein 4-beta-N-acetylglucosaminyltransferase (Homo sapiens (Human)).